A 391-amino-acid polypeptide reads, in one-letter code: Arginine biosynthesis bifunctional protein ArgJ 2 (391 aa).

Substrate-binding residues include Lys-167 and Ser-180. Catalysis depends on Ser-180, which acts as the Nucleophile.

This sequence belongs to the ArgJ family. Heterotetramer of two alpha and two beta chains.

It localises to the cytoplasm. It carries out the reaction N(2)-acetyl-L-ornithine + L-glutamate = N-acetyl-L-glutamate + L-ornithine. It catalyses the reaction L-glutamate + acetyl-CoA = N-acetyl-L-glutamate + CoA + H(+). It functions in the pathway amino-acid biosynthesis; L-arginine biosynthesis; L-ornithine and N-acetyl-L-glutamate from L-glutamate and N(2)-acetyl-L-ornithine (cyclic): step 1/1. The protein operates within amino-acid biosynthesis; L-arginine biosynthesis; N(2)-acetyl-L-ornithine from L-glutamate: step 1/4. Catalyzes two activities which are involved in the cyclic version of arginine biosynthesis: the synthesis of N-acetylglutamate from glutamate and acetyl-CoA as the acetyl donor, and of ornithine by transacetylation between N(2)-acetylornithine and glutamate. This Streptomyces clavuligerus protein is Arginine biosynthesis bifunctional protein ArgJ 2.